We begin with the raw amino-acid sequence, 309 residues long: Homoserine kinase (309 aa).

91-101 is a binding site for ATP; sequence PIGSGLGSSAC.

Belongs to the GHMP kinase family. Homoserine kinase subfamily.

It localises to the cytoplasm. It carries out the reaction L-homoserine + ATP = O-phospho-L-homoserine + ADP + H(+). The protein operates within amino-acid biosynthesis; L-threonine biosynthesis; L-threonine from L-aspartate: step 4/5. Its function is as follows. Catalyzes the ATP-dependent phosphorylation of L-homoserine to L-homoserine phosphate. This chain is Homoserine kinase, found in Pectobacterium atrosepticum (strain SCRI 1043 / ATCC BAA-672) (Erwinia carotovora subsp. atroseptica).